A 445-amino-acid polypeptide reads, in one-letter code: MSMTPREIVHELNRHIIGQDDAKRAVAIALRNRWRRMQLPEELRVEVTPKNILMIGPTGVGKTEIARRLAKLANAPFIKVEATKFTEVGYVGRDVESIIRDLADAAIKMLREQEMTRVRHRAEDAAEDRILDALLPPARMGFSNEEAPTQDSNTRQLFRKRLREGQLDDKEIEIEVAEMAGIEIATPPGMEEMTNQLQNLFANMGKGKKKARKLKVKEALKLVRDEEAGRLVNEEELKAKALEAVEQHGIVFIDEIDKVAKRGNVGGADVSREGVQRDLLPLIEGCTVNTKLGMVKTDHILFIASGAFHLSKPSDLVPELQGRLPIRVELKALSPQDFERILSEPHASLTEQYCALLKTEGLNIQFQPEGIKRLAEIAWQVNEKTENIGARRLHTLLERLLEEVSFSAGDLASAHDDKAIQIDAEYVNSHLGELAQNEDLSRYIL.

Residues Ile-17, 59-64 (GVGKTE), Asp-254, Glu-319, and Arg-391 each bind ATP.

The protein belongs to the ClpX chaperone family. HslU subfamily. A double ring-shaped homohexamer of HslV is capped on each side by a ring-shaped HslU homohexamer. The assembly of the HslU/HslV complex is dependent on binding of ATP.

The protein resides in the cytoplasm. ATPase subunit of a proteasome-like degradation complex; this subunit has chaperone activity. The binding of ATP and its subsequent hydrolysis by HslU are essential for unfolding of protein substrates subsequently hydrolyzed by HslV. HslU recognizes the N-terminal part of its protein substrates and unfolds these before they are guided to HslV for hydrolysis. The chain is ATP-dependent protease ATPase subunit HslU from Pseudomonas fluorescens (strain Pf0-1).